An 88-amino-acid polypeptide reads, in one-letter code: Toxin ICK-12 (88 aa).

The N-terminal stretch at 1-19 (MKSIVYMLLFCTFTVVILG) is a signal peptide. Intrachain disulfides connect Cys41/Cys55, Cys41/Cys78, Cys54/Cys67, and Cys81/Cys88.

This sequence belongs to the neurotoxin 27 (Jztx-72) family. ICK-41 subfamily. As to expression, expressed by the venom gland.

It localises to the secreted. Its function is as follows. Probable neurotoxin with ion channel impairing activity. The chain is Toxin ICK-12 from Trittame loki (Brush-footed trapdoor spider).